Reading from the N-terminus, the 377-residue chain is Molybdenum import ATP-binding protein ModC (377 aa).

Residues I4–D240 enclose the ABC transporter domain. G38–S45 lines the ATP pocket. Residues R299 to R369 form the Mop domain.

This sequence belongs to the ABC transporter superfamily. Molybdate importer (TC 3.A.1.8) family. In terms of assembly, the complex is composed of two ATP-binding proteins (ModC), two transmembrane proteins (ModB) and a solute-binding protein (ModA).

Its subcellular location is the cell inner membrane. It carries out the reaction molybdate(out) + ATP + H2O = molybdate(in) + ADP + phosphate + H(+). Its function is as follows. Part of the ABC transporter complex ModABC involved in molybdenum import. Responsible for energy coupling to the transport system. The chain is Molybdenum import ATP-binding protein ModC from Rhodopseudomonas palustris (strain HaA2).